The primary structure comprises 606 residues: (R)-limonene synthase 1, chloroplastic (606 aa).

A chloroplast-targeting transit peptide spans 1 to 32 (MSSCINPSTLVTSVNAFKCLPLATNKAAIRIM). The Mn(2+) site is built by Asp342 and Asp346. Residues Asp342, Asp346, Arg484, Asp487, and Lys503 each coordinate substrate. Positions 342-346 (DDIYD) match the DDXXD motif motif. Asp487 contacts Mn(2+).

The protein belongs to the terpene synthase family. Mg(2+) serves as cofactor. Requires Mn(2+) as cofactor.

The protein resides in the plastid. It localises to the chloroplast. It catalyses the reaction (2E)-geranyl diphosphate = (4R)-limonene + diphosphate. This Citrus limon (Lemon) protein is (R)-limonene synthase 1, chloroplastic.